The chain runs to 434 residues: MQVSVETTQGLGRRVTITVAADSIEKAVKSELVKAAKNVRIDGFRKGHVPMNIVEQRYGASVRQDVLGDLMQRNFVDAIIKEKINPAGAPNYVPGEYKQGEDFTYSVEFEVYPEVELKDLESIEVEKPVVEVNDADVDTMLETLRKQQATWKETDAAATAEDRATLDFTGSIDGEEFEGGKATDFVLAMGQGRMIPGFEEGVIGHKAGEEFTIDVNFPEDYHAENLKGKSAKFAIVLKKVEVRELPELTEEFIKRFGVADGSLAGLRAEVRKNMERELKGAVRNRVKTQAIDGLVSANNIDVPTALVDGEIDVLRRQAAQRFGGNEKQAAELPRELFEEQAKRRVVVGLLLGEVISQHELKADEDRVKALIEEMASAYEDPQEVIEFYSKNKELMNNMRNVALEEQAVETLLAKAKVTEKPTTFSELMNQTTAA.

Residues 161-246 (EDRATLDFTG…LKKVEVRELP (86 aa)) enclose the PPIase FKBP-type domain.

It belongs to the FKBP-type PPIase family. Tig subfamily.

It localises to the cytoplasm. It catalyses the reaction [protein]-peptidylproline (omega=180) = [protein]-peptidylproline (omega=0). Functionally, involved in protein export. Acts as a chaperone by maintaining the newly synthesized protein in an open conformation. Functions as a peptidyl-prolyl cis-trans isomerase. This Yersinia pseudotuberculosis serotype O:1b (strain IP 31758) protein is Trigger factor.